Consider the following 718-residue polypeptide: Polyribonucleotide nucleotidyltransferase (718 aa).

Mg(2+) contacts are provided by D493 and D499. The KH domain maps to 560–619; it reads PRMITIKINPEKIRDVIGKGGSVIRALTEETGTTIDISDDGVVTIASTSSEGMAEAKKRI. The S1 motif domain occupies 629–697; it reads GQVYEGTVLK…EKGRVRLSAK (69 aa).

The protein belongs to the polyribonucleotide nucleotidyltransferase family. Mg(2+) serves as cofactor.

It is found in the cytoplasm. The catalysed reaction is RNA(n+1) + phosphate = RNA(n) + a ribonucleoside 5'-diphosphate. In terms of biological role, involved in mRNA degradation. Catalyzes the phosphorolysis of single-stranded polyribonucleotides processively in the 3'- to 5'-direction. The polypeptide is Polyribonucleotide nucleotidyltransferase (Paraburkholderia phytofirmans (strain DSM 17436 / LMG 22146 / PsJN) (Burkholderia phytofirmans)).